The following is a 208-amino-acid chain: Small ribosomal subunit protein uS4 (208 aa).

Positions 98–160 (QRLDNVVYRM…SKNNSQIVRA (63 aa)) constitute an S4 RNA-binding domain.

Belongs to the universal ribosomal protein uS4 family. In terms of assembly, part of the 30S ribosomal subunit. Contacts protein S5. The interaction surface between S4 and S5 is involved in control of translational fidelity.

Functionally, one of the primary rRNA binding proteins, it binds directly to 16S rRNA where it nucleates assembly of the body of the 30S subunit. With S5 and S12 plays an important role in translational accuracy. This chain is Small ribosomal subunit protein uS4, found in Sulfurimonas denitrificans (strain ATCC 33889 / DSM 1251) (Thiomicrospira denitrificans (strain ATCC 33889 / DSM 1251)).